The sequence spans 165 residues: Small ribosomal subunit protein uS5 (165 aa).

The 64-residue stretch at 10 to 73 folds into the S5 DRBM domain; it reads LKEKVVFINR…EDAKKHLVEV (64 aa).

The protein belongs to the universal ribosomal protein uS5 family. Part of the 30S ribosomal subunit. Contacts proteins S4 and S8.

Its function is as follows. With S4 and S12 plays an important role in translational accuracy. In terms of biological role, located at the back of the 30S subunit body where it stabilizes the conformation of the head with respect to the body. The chain is Small ribosomal subunit protein uS5 from Clostridium novyi (strain NT).